The chain runs to 122 residues: Large ribosomal subunit protein uL14 (122 aa).

It belongs to the universal ribosomal protein uL14 family. As to quaternary structure, part of the 50S ribosomal subunit. Forms a cluster with proteins L3 and L19. In the 70S ribosome, L14 and L19 interact and together make contacts with the 16S rRNA in bridges B5 and B8.

Functionally, binds to 23S rRNA. Forms part of two intersubunit bridges in the 70S ribosome. In Ralstonia nicotianae (strain ATCC BAA-1114 / GMI1000) (Ralstonia solanacearum), this protein is Large ribosomal subunit protein uL14.